Here is a 488-residue protein sequence, read N- to C-terminus: Acetyl-coenzyme A carboxylase carboxyl transferase subunit beta, chloroplastic (488 aa).

A CoA carboxyltransferase N-terminal domain is found at 221 to 488; that stretch reads LWIQCDNCYA…FFPLNKNEIK (268 aa). Zn(2+)-binding residues include Cys225, Cys228, Cys244, and Cys247. The C4-type zinc finger occupies 225-247; sequence CDNCYALIYKKALKLKLNVCEQC.

Belongs to the AccD/PCCB family. In terms of assembly, acetyl-CoA carboxylase is a heterohexamer composed of biotin carboxyl carrier protein, biotin carboxylase and 2 subunits each of ACCase subunit alpha and ACCase plastid-coded subunit beta (accD). Zn(2+) serves as cofactor.

It is found in the plastid. It localises to the chloroplast stroma. The enzyme catalyses N(6)-carboxybiotinyl-L-lysyl-[protein] + acetyl-CoA = N(6)-biotinyl-L-lysyl-[protein] + malonyl-CoA. The protein operates within lipid metabolism; malonyl-CoA biosynthesis; malonyl-CoA from acetyl-CoA: step 1/1. Component of the acetyl coenzyme A carboxylase (ACC) complex. Biotin carboxylase (BC) catalyzes the carboxylation of biotin on its carrier protein (BCCP) and then the CO(2) group is transferred by the transcarboxylase to acetyl-CoA to form malonyl-CoA. The chain is Acetyl-coenzyme A carboxylase carboxyl transferase subunit beta, chloroplastic from Aethionema grandiflorum (Persian stone-cress).